A 384-amino-acid chain; its full sequence is MLGTEELIQIRHHLHQIPELALQETETHAYLMEVIGKMEQDHLEILEPEDLPTAILVRVNGTAPVRTIGYRTDIDALPVQEETGLPYASTHSGVMHACGHDVHMTVALGVLDYFASHQPKDNLLFFFQPAEESEAGGQRAYELGLFEGKWRPDEFYGLHDNPALKTGVIGCRLGTLFAGTTEVDIDVLGKDGHAAFPQEANDAVVAAAALIMQVQTIISRSINPVEAGVITLGKLEAGTIRNVIAGHARIEGTIRGLTQEMIETIDRRLQDVCEGIAKSFGVTVNLALNQGGYLPVENDPALTKRFINFMQNNPAVDYVETAPAMTGEDFGYLLSKFPGTMFWLGVEDDAQLHQATLTPNEGAIQKGIDALTSFITYRSQAEED.

Residue D73 is part of the active site. The active-site Proton acceptor is E132.

Belongs to the peptidase M20A family. N-acetyldiaminopimelate deacetylase subfamily.

The enzyme catalyses N-acetyl-(2S,6S)-2,6-diaminopimelate + H2O = (2S,6S)-2,6-diaminopimelate + acetate. It functions in the pathway amino-acid biosynthesis; L-lysine biosynthesis via DAP pathway; LL-2,6-diaminopimelate from (S)-tetrahydrodipicolinate (acetylase route): step 3/3. In terms of biological role, catalyzes the conversion of N-acetyl-diaminopimelate to diaminopimelate and acetate. This Limosilactobacillus fermentum (strain NBRC 3956 / LMG 18251) (Lactobacillus fermentum) protein is N-acetyldiaminopimelate deacetylase.